A 961-amino-acid polypeptide reads, in one-letter code: Ubiquitin carboxyl-terminal hydrolase 4 (961 aa).

In terms of domain architecture, DUSP spans 11–122 (PDVETQKTEL…GQQPIVRKVV (112 aa)). The necessary for interaction with SART3 stretch occupies residues 27-216 (TLQRGAQWYL…LYQGQVLVIE (190 aa)). Residues 133–141 (VEVYLLELK) carry the Nuclear export signal motif. The Ubiquitin-like 1 domain occupies 142-226 (LCENSDPTNV…PQNEDGTWPR (85 aa)). Positions 219-257 (NEDGTWPRQTLQSKSSTAPSRNFTTSSKPSASPYSSMSA) are disordered. A compositionally biased stretch (polar residues) spans 225-243 (PRQTLQSKSSTAPSRNFTT). The tract at residues 229–295 (LQSKSSTAPS…SYNCQEPPSP (67 aa)) is required for USP4 activation by providing conformational flexibility between the DUSP and catalytic domains. A compositionally biased stretch (low complexity) spans 244–257 (SSKPSASPYSSMSA). The region spanning 302–921 (CGLGNLGNTC…AAYVLFYQRR (620 aa)) is the USP domain. Cys311 is a catalytic residue. A regulates ubiquitin dissociation region spans residues 384 to 386 (PQF). The interval 405–407 (LHE) is necessary for interaction with RBL2. The residue at position 445 (Ser445) is a Phosphoserine. A necessary for interaction with RB1 and RBL2 region spans residues 459–463 (LVCPE). Cys461 and Cys464 together coordinate Zn(2+). Residues 483 to 571 (LKKDRIMEVF…IFVYEICTTP (89 aa)) form the Ubiquitin-like 2 domain. An interacts with DUSP and ubiquitin-like 1 domains and is required for USP4 activation region spans residues 485–773 (KDRIMEVFLV…SQPQKKKKAA (289 aa)). Residues 641–700 (SSPLEPGACNGSRGSYEGDEEEMDHQEEGKEQLSEVEESGEDSQGGDPTETTQKAKGPPR) are disordered. Residues Ser655, Ser674, and Ser679 each carry the phosphoserine modification. A Nuclear localization signal motif is present at residues 765-770 (QPQKKK). Residues Cys797 and Cys800 each contribute to the Zn(2+) site. His879 is an active-site residue. The interval 924 to 961 (ECPSTSSPVSFPGSDGGAKLSSSQQDLGEEEAYTMDTN) is disordered. The segment covering 950 to 961 (LGEEEAYTMDTN) has biased composition (acidic residues).

This sequence belongs to the peptidase C19 family. USP4 subfamily. In terms of assembly, interacts with RB1 (both dephosphorylated and hypophosphorylated forms). Interacts with RBL1 and RBL2. Interacts with ADORA2A (via cytoplasmic C-terminus); the interaction is direct. Interacts with SART3; recruits USP4 to its substrate PRPF3. Post-translationally, phosphorylated at Ser-445 by PKB/AKT1 in response to EGF stimulus, promoting its ability deubiquitinate RHEB. Monoubiquitinated by TRIM21. Ubiquitination does not lead to its proteasomal degradation. Autodeubiquitinated. In terms of tissue distribution, expressed in hippocampus and striatum (at protein level).

The protein resides in the cytoplasm. It localises to the nucleus. It carries out the reaction Thiol-dependent hydrolysis of ester, thioester, amide, peptide and isopeptide bonds formed by the C-terminal Gly of ubiquitin (a 76-residue protein attached to proteins as an intracellular targeting signal).. With respect to regulation, the completion of the deubiquitinase reaction is mediated by the DUSP and ubiquitin-like 1 domains which promotes the release of ubiquitin from the catalytic site enabling subsequent reactions to occur. Functionally, deubiquitinating enzyme that removes conjugated ubiquitin from target proteins. Deubiquitinates PDPK1. Deubiquitinates TRIM21. Deubiquitinates receptor ADORA2A which increases the amount of functional receptor at the cell surface. Deubiquitinates HAS2. Deubiquitinates RHEB in response to EGF signaling, promoting mTORC1 signaling. May regulate mRNA splicing through deubiquitination of the U4 spliceosomal protein PRPF3. This may prevent its recognition by the U5 component PRPF8 thereby destabilizing interactions within the U4/U6.U5 snRNP. May also play a role in the regulation of quality control in the ER. In Rattus norvegicus (Rat), this protein is Ubiquitin carboxyl-terminal hydrolase 4 (Usp4).